We begin with the raw amino-acid sequence, 129 residues long: Glycine cleavage system H protein (129 aa).

The region spanning 24 to 106 (SYTVGITEHA…YGEGWFFRVM (83 aa)) is the Lipoyl-binding domain. N6-lipoyllysine is present on K65.

Belongs to the GcvH family. The glycine cleavage system is composed of four proteins: P, T, L and H. (R)-lipoate is required as a cofactor.

Functionally, the glycine cleavage system catalyzes the degradation of glycine. The H protein shuttles the methylamine group of glycine from the P protein to the T protein. In Shewanella baltica (strain OS155 / ATCC BAA-1091), this protein is Glycine cleavage system H protein.